The primary structure comprises 120 residues: Large ribosomal subunit protein bL17 (120 aa).

This sequence belongs to the bacterial ribosomal protein bL17 family. In terms of assembly, part of the 50S ribosomal subunit. Contacts protein L32.

The sequence is that of Large ribosomal subunit protein bL17 from Mesomycoplasma hyopneumoniae (strain 7448) (Mycoplasma hyopneumoniae).